A 914-amino-acid chain; its full sequence is MASENSPLLAYRLLGEEGAAFPPNGAGGSGVASARKLSTFLGVVVPTVLSMFSIVVFLRIGFVVGHAGLLQALAMLLVAYVILALTVLSVCAIATNGAVRGGGAYFMISRTLGPEVGGSIGLMFYLANVCGCAVSLLGLVESILDVFGADVTGSSGIKVLPQGYGWNLLYGSLLLGLVGGVCALGAGLYARASFLTFLLVSGSLASVLVSFVAVGPRNITLAPRPGTNGSSVPPRHGHFTGFNGSTLKDNLGAGYAEDYTTGAMMTFASVFAVLFNGCTGIMAGANMSGELKDPSRAIPLGTIIAVAYTFFIYILLFFLSSFTCDRALLQGDYGFFRDISLWPPLVLIGIYATALSASMSSLIGASRILHALAQDDLFGVILAPAKVVSGGGNPWGAVLYSWGLVQLVLLAGKLNTLAAVVTVFYLVAYAAVDLSCLSLEWASAPNFRPTFSLFSWHTCLLGVASCLLMMFLISPGAAGGSLLLMGLLSALLTARGGPSSWGYVSQALLFHQVRKYLLRLDVRKEHVKFWRPQLLLLVGNPRGALPLLRLANQLKKGGLYVLGHVTLGDLDSLPSDPVQPQYGAWLSLVDLAQVKAFVDLTLSPSVRQGAQHLLRISGLGGMKPNTLVLGFYDDAPPQDHFLTDPAFSEPAEGTREGGSPALSTLFPPPRAPGSPRALSPQDYVATVADALKMNKNVVLARACGALPPERLSRGSGSSAQLHHVDVWPLNLLRPRGGPGYVDVCGLFLLQMATILSMVPAWHSARLRIFLCLGPREAPGAAEGRLRALLSQLRIRAEVQEVVWGEGAEAGEPEEEEGDFVNGGRGDEEAEALACSANALVRAQQGRGTGGGPGGPEGRDGEEGPTTALTFLYLPRPPADPARYPRYLALLETLSRDLGPTLLIHGVTPVTCTDL.

Residues 1–36 (MASENSPLLAYRLLGEEGAAFPPNGAGGSGVASARK) are Cytoplasmic-facing. The residue at position 6 (Ser-6) is a Phosphoserine. A helical membrane pass occupies residues 37–57 (LSTFLGVVVPTVLSMFSIVVF). Residues 58 to 72 (LRIGFVVGHAGLLQA) are Extracellular-facing. A helical membrane pass occupies residues 73–93 (LAMLLVAYVILALTVLSVCAI). Over 94–119 (ATNGAVRGGGAYFMISRTLGPEVGGS) the chain is Cytoplasmic. Residues 120–140 (IGLMFYLANVCGCAVSLLGLV) traverse the membrane as a helical segment. The Extracellular segment spans residues 141–167 (ESILDVFGADVTGSSGIKVLPQGYGWN). Residues 168–188 (LLYGSLLLGLVGGVCALGAGL) form a helical membrane-spanning segment. Over 189 to 193 (YARAS) the chain is Cytoplasmic. The helical transmembrane segment at 194–214 (FLTFLLVSGSLASVLVSFVAV) threads the bilayer. The Extracellular portion of the chain corresponds to 215 to 262 (GPRNITLAPRPGTNGSSVPPRHGHFTGFNGSTLKDNLGAGYAEDYTTG). Residues Asn-218, Asn-228, and Asn-243 are each glycosylated (N-linked (GlcNAc...) asparagine). Residues 263 to 283 (AMMTFASVFAVLFNGCTGIMA) form a helical membrane-spanning segment. Residues 284-297 (GANMSGELKDPSRA) are Cytoplasmic-facing. The chain crosses the membrane as a helical span at residues 298-318 (IPLGTIIAVAYTFFIYILLFF). Topologically, residues 319–338 (LSSFTCDRALLQGDYGFFRD) are extracellular. The chain crosses the membrane as a helical span at residues 339 to 359 (ISLWPPLVLIGIYATALSASM). Residues 360–376 (SSLIGASRILHALAQDD) lie on the Cytoplasmic side of the membrane. A helical transmembrane segment spans residues 377–399 (LFGVILAPAKVVSGGGNPWGAVL). At 400–416 (YSWGLVQLVLLAGKLNT) the chain is on the extracellular side. Residues 417-437 (LAAVVTVFYLVAYAAVDLSCL) traverse the membrane as a helical segment. The Cytoplasmic portion of the chain corresponds to 438 to 466 (SLEWASAPNFRPTFSLFSWHTCLLGVASC). Residues 467-487 (LLMMFLISPGAAGGSLLLMGL) form a helical membrane-spanning segment. The Extracellular portion of the chain corresponds to 488 to 740 (LSALLTARGG…LLRPRGGPGY (253 aa)). The segment at 645–678 (PAFSEPAEGTREGGSPALSTLFPPPRAPGSPRAL) is disordered. The chain crosses the membrane as a helical span at residues 741-761 (VDVCGLFLLQMATILSMVPAW). Topologically, residues 762 to 914 (HSARLRIFLC…GVTPVTCTDL (153 aa)) are cytoplasmic. Residues 843 to 864 (QQGRGTGGGPGGPEGRDGEEGP) are disordered. Positions 846-855 (RGTGGGPGGP) are enriched in gly residues.

The protein belongs to the SLC12A transporter family. As to quaternary structure, interacts with SLC12A1.

The protein resides in the cell membrane. It localises to the lysosome membrane. Its function is as follows. May be an inhibitor of SLC12A1. Seems to correspond to a subunit of a multimeric transport system and thus, additional subunits may be required for its function. May play a role in lysosomal ion flux and osmoregulation. The sequence is that of Solute carrier family 12 member 9 (Slc12a9) from Rattus norvegicus (Rat).